The chain runs to 261 residues: uncharacterized protein (261 aa).

6 helical membrane-spanning segments follow: residues 31–51 (TFLS…TGIV), 71–91 (TNVM…SWLL), 101–121 (LAYI…AGIA), 130–150 (LTSS…ASFI), 167–187 (LLLF…IPYV), and 213–233 (FAWL…YLAI).

The protein localises to the cell membrane. This is an uncharacterized protein from Mycoplasma genitalium (strain ATCC 33530 / DSM 19775 / NCTC 10195 / G37) (Mycoplasmoides genitalium).